A 101-amino-acid polypeptide reads, in one-letter code: Large ribosomal subunit protein eL36 (101 aa).

2 disordered regions span residues 1–31 and 75–101; these read MGEI…GFLS and GTHM…SKGE.

It belongs to the eukaryotic ribosomal protein eL36 family.

The polypeptide is Large ribosomal subunit protein eL36 (RL36) (Ulva compressa (Green alga)).